We begin with the raw amino-acid sequence, 391 residues long: GTPase Obg (391 aa).

The Obg domain maps to 1 to 159 (MKFVDEARIL…RELMLELMLL (159 aa)). Residues 160-333 (ADVGMLGMPN…LCWDIMEFMK (174 aa)) enclose the OBG-type G domain. GTP contacts are provided by residues 166-173 (GMPNAGKS), 191-195 (FTTLV), 213-216 (DIPG), 283-286 (NKVD), and 314-316 (SAI). The Mg(2+) site is built by Ser173 and Thr193.

It belongs to the TRAFAC class OBG-HflX-like GTPase superfamily. OBG GTPase family. Monomer. It depends on Mg(2+) as a cofactor.

It localises to the cytoplasm. Its function is as follows. An essential GTPase which binds GTP, GDP and possibly (p)ppGpp with moderate affinity, with high nucleotide exchange rates and a fairly low GTP hydrolysis rate. Plays a role in control of the cell cycle, stress response, ribosome biogenesis and in those bacteria that undergo differentiation, in morphogenesis control. The sequence is that of GTPase Obg from Photorhabdus laumondii subsp. laumondii (strain DSM 15139 / CIP 105565 / TT01) (Photorhabdus luminescens subsp. laumondii).